Reading from the N-terminus, the 137-residue chain is UPF0275 protein PM0489 (137 aa).

It belongs to the UPF0275 family.

In Pasteurella multocida (strain Pm70), this protein is UPF0275 protein PM0489.